We begin with the raw amino-acid sequence, 243 residues long: Small ribosomal subunit protein uS2c (243 aa).

This sequence belongs to the universal ribosomal protein uS2 family.

Its subcellular location is the plastid. It localises to the chloroplast. In Cyanidium caldarium (Red alga), this protein is Small ribosomal subunit protein uS2c (rps2).